The following is a 255-amino-acid chain: ParA family protein CPn_0805/CP_1066/CPj0805/CpB0834 (255 aa).

Belongs to the ParA family.

The protein is ParA family protein CPn_0805/CP_1066/CPj0805/CpB0834 of Chlamydia pneumoniae (Chlamydophila pneumoniae).